The primary structure comprises 151 residues: 3-hydroxyacyl-[acyl-carrier-protein] dehydratase FabZ (151 aa).

Residue His56 is part of the active site.

This sequence belongs to the thioester dehydratase family. FabZ subfamily.

The protein resides in the cytoplasm. It catalyses the reaction a (3R)-hydroxyacyl-[ACP] = a (2E)-enoyl-[ACP] + H2O. Involved in unsaturated fatty acids biosynthesis. Catalyzes the dehydration of short chain beta-hydroxyacyl-ACPs and long chain saturated and unsaturated beta-hydroxyacyl-ACPs. The polypeptide is 3-hydroxyacyl-[acyl-carrier-protein] dehydratase FabZ (Nitrobacter hamburgensis (strain DSM 10229 / NCIMB 13809 / X14)).